The chain runs to 370 residues: Formate dehydrogenase (370 aa).

Residues Ile94 and Asn120 each contribute to the substrate site. NAD(+) contacts are provided by residues 175-176, Asp196, 231-235, Thr257, Asp283, and 312-315; these read RI, PLHES, and HMSG.

Belongs to the D-isomer specific 2-hydroxyacid dehydrogenase family. FDH subfamily. As to quaternary structure, homodimer.

The protein resides in the cytoplasm. It catalyses the reaction formate + NAD(+) = CO2 + NADH. Its function is as follows. Catalyzes the NAD(+)-dependent oxidation of formate to carbon dioxide. Formate oxidation is the final step in the methanol oxidation pathway in methylotrophic microorganisms. Has a role in the detoxification of exogenous formate in non-methylotrophic organisms. The protein is Formate dehydrogenase of Chaetomium thermophilum (strain DSM 1495 / CBS 144.50 / IMI 039719) (Thermochaetoides thermophila).